Here is a 341-residue protein sequence, read N- to C-terminus: D-aspartate oxidase (341 aa).

Positions 36, 37, 43, 44, 50, 307, and 311 each coordinate FAD. The Microbody targeting signal motif lies at 339–341 (SKL).

It belongs to the DAMOX/DASOX family. In terms of assembly, homotetramer. Interacts with PEX5; the interaction is direct and required for localization of DDO to the peroxisome. FAD serves as cofactor. As to expression, expressed in epithelial cells of the renal proximal tubules (not detected in the glomeruli or renal distal tubules), liver, right atrium of heart, lung, chief cells of the gastric mucosa, choroid plexus, pia mater, brain stem, midbrain, pons, medulla oblongata, hypothalamus, hippocampus, cerebral cortex, cerebellum, ependyma, olfactory bulb and the pituitary, pineal, thyroid and adrenal glands (at protein level).

Its subcellular location is the peroxisome matrix. The protein localises to the cytoplasm. It localises to the cytosol. It carries out the reaction D-aspartate + O2 + H2O = oxaloacetate + H2O2 + NH4(+). It catalyses the reaction D-glutamate + O2 + H2O = H2O2 + 2-oxoglutarate + NH4(+). Functionally, selectively catalyzes the oxidative deamination of acidic amino acids. Suppresses the level of D-aspartate in the brain, an amino acid that can act as an agonist for glutamate receptors. Protects the organism from the toxicity of D-amino acids. May also function in the intestine. In Sus scrofa (Pig), this protein is D-aspartate oxidase (DDO).